Here is a 158-residue protein sequence, read N- to C-terminus: Phosphopantetheine adenylyltransferase (158 aa).

Ser9 contributes to the substrate binding site. Residues Ser9 to Phe10 and His17 contribute to the ATP site. Residues Lys41, Val73, and Lys87 each contribute to the substrate site. ATP-binding positions include Gly88 to Arg90, Glu98, and Tyr122 to Ser128.

This sequence belongs to the bacterial CoaD family. In terms of assembly, homohexamer. The cofactor is Mg(2+).

It localises to the cytoplasm. The enzyme catalyses (R)-4'-phosphopantetheine + ATP + H(+) = 3'-dephospho-CoA + diphosphate. The protein operates within cofactor biosynthesis; coenzyme A biosynthesis; CoA from (R)-pantothenate: step 4/5. In terms of biological role, reversibly transfers an adenylyl group from ATP to 4'-phosphopantetheine, yielding dephospho-CoA (dPCoA) and pyrophosphate. In Mycobacterium sp. (strain JLS), this protein is Phosphopantetheine adenylyltransferase.